Here is a 154-residue protein sequence, read N- to C-terminus: Ribonuclease H (154 aa).

An RNase H type-1 domain is found at M1–G142. D10, E48, D70, and D134 together coordinate Mg(2+).

It belongs to the RNase H family. In terms of assembly, monomer. Mg(2+) serves as cofactor.

It localises to the cytoplasm. The enzyme catalyses Endonucleolytic cleavage to 5'-phosphomonoester.. Endonuclease that specifically degrades the RNA of RNA-DNA hybrids. This Pectobacterium carotovorum subsp. carotovorum (strain PC1) protein is Ribonuclease H.